The sequence spans 242 residues: Tryptophan synthase alpha chain (242 aa).

Catalysis depends on proton acceptor residues E31 and D42.

Belongs to the TrpA family. As to quaternary structure, tetramer of two alpha and two beta chains.

It catalyses the reaction (1S,2R)-1-C-(indol-3-yl)glycerol 3-phosphate + L-serine = D-glyceraldehyde 3-phosphate + L-tryptophan + H2O. It functions in the pathway amino-acid biosynthesis; L-tryptophan biosynthesis; L-tryptophan from chorismate: step 5/5. Functionally, the alpha subunit is responsible for the aldol cleavage of indoleglycerol phosphate to indole and glyceraldehyde 3-phosphate. This Staphylococcus aureus (strain bovine RF122 / ET3-1) protein is Tryptophan synthase alpha chain.